The chain runs to 157 residues: Small ribosomal subunit protein uS7 (157 aa).

This sequence belongs to the universal ribosomal protein uS7 family. Part of the 30S ribosomal subunit. Contacts proteins S9 and S11.

In terms of biological role, one of the primary rRNA binding proteins, it binds directly to 16S rRNA where it nucleates assembly of the head domain of the 30S subunit. Is located at the subunit interface close to the decoding center, probably blocks exit of the E-site tRNA. This is Small ribosomal subunit protein uS7 from Caulobacter sp. (strain K31).